The chain runs to 130 residues: Ribosome-binding factor A (130 aa).

This sequence belongs to the RbfA family. In terms of assembly, monomer. Binds 30S ribosomal subunits, but not 50S ribosomal subunits or 70S ribosomes.

It localises to the cytoplasm. Its function is as follows. One of several proteins that assist in the late maturation steps of the functional core of the 30S ribosomal subunit. Associates with free 30S ribosomal subunits (but not with 30S subunits that are part of 70S ribosomes or polysomes). Required for efficient processing of 16S rRNA. May interact with the 5'-terminal helix region of 16S rRNA. In Prochlorococcus marinus (strain MIT 9301), this protein is Ribosome-binding factor A.